The primary structure comprises 151 residues: Mini-ribonuclease 3 (151 aa).

Residue aspartate 30 is part of the active site.

This sequence belongs to the MrnC RNase family. Homodimer. It depends on Mg(2+) as a cofactor.

Its subcellular location is the cytoplasm. Functionally, involved in correct processing of both the 5' and 3' ends of 23S rRNA precursor. Processes 30S rRNA precursor transcript even in absence of ribonuclease 3 (Rnc); Rnc processes 30S rRNA into smaller rRNA precursors. This Thermosynechococcus vestitus (strain NIES-2133 / IAM M-273 / BP-1) protein is Mini-ribonuclease 3.